The following is a 492-amino-acid chain: Probable cobyric acid synthase (492 aa).

One can recognise a GATase cobBQ-type domain in the interval 248 to 434; it reads PVRIAVVRLP…MHGLFQNPGA (187 aa). The Nucleophile role is filled by Cys-327. His-426 is a catalytic residue.

The protein belongs to the CobB/CobQ family. CobQ subfamily.

It participates in cofactor biosynthesis; adenosylcobalamin biosynthesis. Its function is as follows. Catalyzes amidations at positions B, D, E, and G on adenosylcobyrinic A,C-diamide. NH(2) groups are provided by glutamine, and one molecule of ATP is hydrogenolyzed for each amidation. The sequence is that of Probable cobyric acid synthase from Methanoculleus marisnigri (strain ATCC 35101 / DSM 1498 / JR1).